Consider the following 499-residue polypeptide: uncharacterized protein (499 aa).

Residues E6 to R35 and Y272 to D282 contribute to the FAD site.

The protein belongs to the PheA/TfdB FAD monooxygenase family. FAD serves as cofactor.

This is an uncharacterized protein from Bacillus subtilis (strain 168).